A 393-amino-acid polypeptide reads, in one-letter code: L-rhamnonate dehydratase (393 aa).

Substrate-binding residues include His-22 and Arg-48. Mg(2+) contacts are provided by Asp-214, Glu-241, and Glu-269. The Proton acceptor role is filled by His-319. Glu-339 provides a ligand contact to substrate.

This sequence belongs to the mandelate racemase/muconate lactonizing enzyme family. RhamD subfamily. In terms of assembly, homooctamer; tetramer of dimers. Mg(2+) serves as cofactor.

It catalyses the reaction L-rhamnonate = 2-dehydro-3-deoxy-L-rhamnonate + H2O. Its function is as follows. Catalyzes the dehydration of L-rhamnonate to 2-keto-3-deoxy-L-rhamnonate (KDR). The protein is L-rhamnonate dehydratase of Azorhizobium caulinodans (strain ATCC 43989 / DSM 5975 / JCM 20966 / LMG 6465 / NBRC 14845 / NCIMB 13405 / ORS 571).